Consider the following 617-residue polypeptide: Probable Xaa-Pro aminopeptidase P (617 aa).

Residues Asp414, Asp425, Glu523, and Glu537 each contribute to the Mn(2+) site.

Belongs to the peptidase M24B family. It depends on Mn(2+) as a cofactor.

It carries out the reaction Release of any N-terminal amino acid, including proline, that is linked to proline, even from a dipeptide or tripeptide.. Its function is as follows. Catalyzes the removal of a penultimate prolyl residue from the N-termini of peptides. The polypeptide is Probable Xaa-Pro aminopeptidase P (AMPP) (Blastomyces gilchristii (strain SLH14081) (Blastomyces dermatitidis)).